A 62-amino-acid chain; its full sequence is Translational regulator CsrA (62 aa).

It belongs to the CsrA/RsmA family. In terms of assembly, homodimer; the beta-strands of each monomer intercalate to form a hydrophobic core, while the alpha-helices form wings that extend away from the core.

It is found in the cytoplasm. Functionally, a key translational regulator that binds mRNA to regulate translation initiation and/or mRNA stability. Mediates global changes in gene expression, shifting from rapid growth to stress survival by linking envelope stress, the stringent response and the catabolite repression systems. Usually binds in the 5'-UTR; binding at or near the Shine-Dalgarno sequence prevents ribosome-binding, repressing translation, binding elsewhere in the 5'-UTR can activate translation and/or stabilize the mRNA. Its function is antagonized by small RNA(s). This is Translational regulator CsrA from Idiomarina loihiensis (strain ATCC BAA-735 / DSM 15497 / L2-TR).